We begin with the raw amino-acid sequence, 330 residues long: G-protein coupled bile acid receptor 1 (330 aa).

The Extracellular segment spans residues 1–19 (MTPNSTGEVPGPIPRGALE). The N-linked (GlcNAc...) asparagine glycan is linked to Asn4. The chain crosses the membrane as a helical span at residues 20 to 40 (LSLALASLIIAANLLLALGIA). Residues 41–50 (CDRRLRSPPA) are Cytoplasmic-facing. A helical membrane pass occupies residues 51 to 71 (GCFFLSLLLAGLLTGLALPTL). The Extracellular portion of the chain corresponds to 72 to 85 (PGLWRQSHRGYWSC). The cysteines at positions 85 and 155 are disulfide-linked. The chain crosses the membrane as a helical span at residues 86–106 (LLVYLAPNFSFLSLLANLLLV). The Cytoplasmic portion of the chain corresponds to 107 to 125 (HGERYVAVLRPLQPPGSIR). A helical membrane pass occupies residues 126 to 146 (LALLLTWTGPLLFASLPALGW). Residues 147–169 (NHWGPEANCSSQTIFPAPYLYLE) are Extracellular-facing. N-linked (GlcNAc...) asparagine glycosylation occurs at Asn154. The helical transmembrane segment at 170–190 (VYGLLLPAVGAAALLSAHVLL) threads the bilayer. The Cytoplasmic segment spans residues 191–230 (AAHRQLQDIRRLERAVCRDAPSALARALTWRQARAQAGAT). The helical transmembrane segment at 231-251 (LLFGLCWGPYVATLFLSVLAY) threads the bilayer. Residues 252–261 (EQRPPLGPGT) lie on the Extracellular side of the membrane. A helical membrane pass occupies residues 262 to 282 (LLSLLSLGSASAAAVPVAMGL). The Cytoplasmic portion of the chain corresponds to 283 to 330 (GDHRYTAPWRAAARRWLRGLRGRGSQASPGPSTAYHTSSQSSVDVDLN). Residues 304-330 (GRGSQASPGPSTAYHTSSQSSVDVDLN) are disordered. Residues 307-330 (SQASPGPSTAYHTSSQSSVDVDLN) are compositionally biased toward polar residues.

Belongs to the G-protein coupled receptor 1 family. Expressed at high level in spleen. Expressed at lower level in thymus, heart, lung, liver, kidney, ileum, blood and adherent alveolar macrophage cells.

The protein localises to the cell membrane. In terms of biological role, receptor for bile acid. Bile-acid binding induces its internalization, activation of extracellular signal-regulated kinase and intracellular cAMP production. May be involved in the suppression of macrophage functions by bile acids. Involved in bile acid promoted GLP1R secretion. This Oryctolagus cuniculus (Rabbit) protein is G-protein coupled bile acid receptor 1 (GPBAR1).